Here is a 75-residue protein sequence, read N- to C-terminus: Sec-independent protein translocase protein TatA (75 aa).

A helical membrane pass occupies residues 1–21 (MFGLSPAQLIILLVVILLIFG).

Belongs to the TatA/E family. As to quaternary structure, the Tat system comprises two distinct complexes: a TatABC complex, containing multiple copies of TatA, TatB and TatC subunits, and a separate TatA complex, containing only TatA subunits. Substrates initially bind to the TatABC complex, which probably triggers association of the separate TatA complex to form the active translocon.

Its subcellular location is the cell inner membrane. Its function is as follows. Part of the twin-arginine translocation (Tat) system that transports large folded proteins containing a characteristic twin-arginine motif in their signal peptide across membranes. TatA could form the protein-conducting channel of the Tat system. In Haemophilus influenzae (strain PittEE), this protein is Sec-independent protein translocase protein TatA.